Reading from the N-terminus, the 45-residue chain is Large ribosomal subunit protein bL34 (45 aa).

It belongs to the bacterial ribosomal protein bL34 family.

The sequence is that of Large ribosomal subunit protein bL34 from Prochlorococcus marinus (strain MIT 9313).